A 311-amino-acid polypeptide reads, in one-letter code: Formimidoylglutamase (311 aa).

Residues histidine 130, aspartate 155, histidine 157, aspartate 159, cysteine 242, and aspartate 244 each contribute to the Mn(2+) site.

The protein belongs to the arginase family. Requires Mn(2+) as cofactor.

It catalyses the reaction N-formimidoyl-L-glutamate + H2O = formamide + L-glutamate. It functions in the pathway amino-acid degradation; L-histidine degradation into L-glutamate; L-glutamate from N-formimidoyl-L-glutamate (hydrolase route): step 1/1. In terms of biological role, catalyzes the conversion of N-formimidoyl-L-glutamate to L-glutamate and formamide. This chain is Formimidoylglutamase, found in Staphylococcus aureus (strain MSSA476).